Reading from the N-terminus, the 156-residue chain is ATP synthase subunit b (156 aa).

The helical transmembrane segment at 7–27 (FFAQMVVFFILWWVVAKFIWP) threads the bilayer.

It belongs to the ATPase B chain family. F-type ATPases have 2 components, F(1) - the catalytic core - and F(0) - the membrane proton channel. F(1) has five subunits: alpha(3), beta(3), gamma(1), delta(1), epsilon(1). F(0) has three main subunits: a(1), b(2) and c(10-14). The alpha and beta chains form an alternating ring which encloses part of the gamma chain. F(1) is attached to F(0) by a central stalk formed by the gamma and epsilon chains, while a peripheral stalk is formed by the delta and b chains.

The protein localises to the cell inner membrane. Its function is as follows. F(1)F(0) ATP synthase produces ATP from ADP in the presence of a proton or sodium gradient. F-type ATPases consist of two structural domains, F(1) containing the extramembraneous catalytic core and F(0) containing the membrane proton channel, linked together by a central stalk and a peripheral stalk. During catalysis, ATP synthesis in the catalytic domain of F(1) is coupled via a rotary mechanism of the central stalk subunits to proton translocation. Component of the F(0) channel, it forms part of the peripheral stalk, linking F(1) to F(0). The chain is ATP synthase subunit b from Cupriavidus taiwanensis (strain DSM 17343 / BCRC 17206 / CCUG 44338 / CIP 107171 / LMG 19424 / R1) (Ralstonia taiwanensis (strain LMG 19424)).